We begin with the raw amino-acid sequence, 302 residues long: Quinolinate synthase (302 aa).

Residues histidine 24 and serine 41 each coordinate iminosuccinate. Cysteine 86 serves as a coordination point for [4Fe-4S] cluster. Residues 112–114 (YVN) and serine 129 contribute to the iminosuccinate site. Cysteine 171 is a [4Fe-4S] cluster binding site. Residues 197-199 (HPE) and threonine 214 each bind iminosuccinate. Cysteine 259 contributes to the [4Fe-4S] cluster binding site.

Belongs to the quinolinate synthase family. Type 2 subfamily. [4Fe-4S] cluster is required as a cofactor.

Its subcellular location is the cytoplasm. It carries out the reaction iminosuccinate + dihydroxyacetone phosphate = quinolinate + phosphate + 2 H2O + H(+). Its pathway is cofactor biosynthesis; NAD(+) biosynthesis; quinolinate from iminoaspartate: step 1/1. Its function is as follows. Catalyzes the condensation of iminoaspartate with dihydroxyacetone phosphate to form quinolinate. The sequence is that of Quinolinate synthase from Dehalococcoides mccartyi (strain ATCC BAA-2100 / JCM 16839 / KCTC 5957 / BAV1).